The following is a 329-amino-acid chain: Nuclear pore complex protein NUP35 (329 aa).

2 disordered regions span residues 48–105 and 123–167; these read NFGG…GKGK and VSGS…PPRE. The span at 123–139 shows a compositional bias: polar residues; the sequence is VSGSPSWWSQSKAGSST. Residues 183–264 form the RRM Nup35-type domain; it reads LDEEEWVTVY…KPVDPIQKQA (82 aa). Residues 271-315 are disordered; sequence NQGFMPLPPPSSTRNTARPLSRPQYLQNGSAFSPQPSGGAMASPS. A compositionally biased stretch (polar residues) spans 282-306; that stretch reads STRNTARPLSRPQYLQNGSAFSPQP.

Belongs to the Nup35 family. In terms of assembly, part of the nuclear pore complex (NPC). The NPC has an eight-fold symmetrical structure comprising a central transport channel and two rings, the cytoplasmic and nuclear rings, to which eight filaments are attached. The cytoplasmic filaments have loose ends, while the nuclear filaments are joined in a distal ring, forming a nuclear basket. NPCs are highly dynamic in configuration and composition, and can be devided in 3 subcomplexes, the NUP62 subcomplex, the NUP107-160 subcomplex and the NUP93 subcomplex, containing approximately 30 different nucleoporin proteins.

It localises to the nucleus. The protein localises to the nuclear pore complex. The protein is Nuclear pore complex protein NUP35 of Arabidopsis thaliana (Mouse-ear cress).